Here is an 81-residue protein sequence, read N- to C-terminus: Acyl carrier protein (81 aa).

One can recognise a Carrier domain in the interval 4 to 79 (DEVYSRVRKI…DAVNYILSKK (76 aa)). Serine 39 carries the O-(pantetheine 4'-phosphoryl)serine modification.

This sequence belongs to the acyl carrier protein (ACP) family. Post-translationally, 4'-phosphopantetheine is transferred from CoA to a specific serine of apo-ACP by AcpS. This modification is essential for activity because fatty acids are bound in thioester linkage to the sulfhydryl of the prosthetic group.

The protein localises to the cytoplasm. Its pathway is lipid metabolism; fatty acid biosynthesis. Carrier of the growing fatty acid chain in fatty acid biosynthesis. This chain is Acyl carrier protein, found in Synechococcus sp. (strain JA-3-3Ab) (Cyanobacteria bacterium Yellowstone A-Prime).